The primary structure comprises 404 residues: p-hydroxybenzoate hydroxylase (404 aa).

FAD is bound by residues E35, 45 to 50, and Q105; that span reads RIRAGI. Substrate contacts are provided by residues Y203, 214–216, and Y224; that span reads SMR. D288 is an FAD binding site. P295 serves as a coordination point for substrate. FAD is bound at residue 301–302; it reads LN.

This sequence belongs to the aromatic-ring hydroxylase family. In terms of assembly, homodimer. Requires FAD as cofactor.

It carries out the reaction 4-hydroxybenzoate + NADPH + O2 + H(+) = 3,4-dihydroxybenzoate + NADP(+) + H2O. The protein operates within aromatic compound metabolism; benzoate degradation via hydroxylation; 3,4-dihydroxybenzoate from benzoate: step 2/2. In terms of biological role, catalyzes the incorporation of an atom of dioxygen into p-hydroxybenzoate (p-OHB) to form 3,4-dihydroxybenzoate (3,4DOHB). The reaction occurs in two parts: reduction of the flavin adenine dinucleotide (FAD) in the enzyme by reduced nicotinamide adenine dinucleotide phosphate (NADPH) in response to binding p-hydroxybenzoate to the enzyme and oxidation of reduced FAD with oxygen to form a hydroperoxide, which then oxygenates p-hydroxybenzoate. This is p-hydroxybenzoate hydroxylase (pobA) from Acinetobacter baylyi (strain ATCC 33305 / BD413 / ADP1).